We begin with the raw amino-acid sequence, 62 residues long: Translational regulator CsrA (62 aa).

The protein belongs to the CsrA/RsmA family. Homodimer; the beta-strands of each monomer intercalate to form a hydrophobic core, while the alpha-helices form wings that extend away from the core.

It is found in the cytoplasm. Functionally, a key translational regulator that binds mRNA to regulate translation initiation and/or mRNA stability. Mediates global changes in gene expression, shifting from rapid growth to stress survival by linking envelope stress, the stringent response and the catabolite repression systems. Usually binds in the 5'-UTR; binding at or near the Shine-Dalgarno sequence prevents ribosome-binding, repressing translation, binding elsewhere in the 5'-UTR can activate translation and/or stabilize the mRNA. Its function is antagonized by small RNA(s). The polypeptide is Translational regulator CsrA (Pasteurella multocida (strain Pm70)).